The following is a 204-amino-acid chain: Protein OPG030 (204 aa).

A BACK domain is found at 95-177 (FLRQYINNNI…ITYSELTNAI (83 aa)).

Belongs to the orthopoxvirus OPG030 family.

In Bos taurus (Bovine), this protein is Protein OPG030 (OPG30).